A 754-amino-acid chain; its full sequence is tRNA(Met) cytidine acetyltransferase TmcA (754 aa).

A disordered region spans residues 181 to 202 (GISFDAAPPRVPTEKDRRSPRR). Over residues 192–202 (PTEKDRRSPRR) the composition is skewed to basic and acidic residues. ATP-binding positions include Gln212, 236–245 (GRGKSSAAGL), and Arg383. One can recognise an N-acetyltransferase domain in the interval 418–603 (VSYRALSPDD…YSALMTRPLS (186 aa)). Acetyl-CoA is bound by residues 529–531 (IAT), 536–542 (RSSGLGS), and Glu568.

Belongs to the RNA cytidine acetyltransferase family. TmcA subfamily.

Its subcellular location is the cytoplasm. It catalyses the reaction cytidine(34) in elongator tRNA(Met) + acetyl-CoA + ATP + H2O = N(4)-acetylcytidine(34) in elongator tRNA(Met) + ADP + phosphate + CoA + H(+). Functionally, catalyzes the formation of N(4)-acetylcytidine (ac(4)C) at the wobble position of tRNA(Met), by using acetyl-CoA as an acetyl donor and ATP (or GTP). This Haloferax volcanii (strain ATCC 29605 / DSM 3757 / JCM 8879 / NBRC 14742 / NCIMB 2012 / VKM B-1768 / DS2) (Halobacterium volcanii) protein is tRNA(Met) cytidine acetyltransferase TmcA.